A 208-amino-acid chain; its full sequence is Small ribosomal subunit protein uS4 (208 aa).

Residues 98 to 158 (GRLDNVVYRM…EKSKKQARIK (61 aa)) form the S4 RNA-binding domain.

This sequence belongs to the universal ribosomal protein uS4 family. As to quaternary structure, part of the 30S ribosomal subunit. Contacts protein S5. The interaction surface between S4 and S5 is involved in control of translational fidelity.

Its function is as follows. One of the primary rRNA binding proteins, it binds directly to 16S rRNA where it nucleates assembly of the body of the 30S subunit. In terms of biological role, with S5 and S12 plays an important role in translational accuracy. This chain is Small ribosomal subunit protein uS4, found in Haemophilus ducreyi (strain 35000HP / ATCC 700724).